A 203-amino-acid chain; its full sequence is SPbeta prophage-derived uncharacterized lipoprotein YonS (203 aa).

The N-terminal stretch at 1 to 21 (MKLFKKLGILLLITSLILLAA) is a signal peptide. Cys-22 is lipidated: N-palmitoyl cysteine. A lipid anchor (S-diacylglycerol cysteine) is attached at Cys-22. Residues 27–46 (ESSSSSEDTNNATDTNTSES) are compositionally biased toward low complexity. The segment at 27-57 (ESSSSSEDTNNATDTNTSESQDISVNGPEKV) is disordered.

Its subcellular location is the cell membrane. The polypeptide is SPbeta prophage-derived uncharacterized lipoprotein YonS (yonS) (Bacillus subtilis (strain 168)).